Here is a 156-residue protein sequence, read N- to C-terminus: SsrA-binding protein (156 aa).

It belongs to the SmpB family.

It localises to the cytoplasm. Required for rescue of stalled ribosomes mediated by trans-translation. Binds to transfer-messenger RNA (tmRNA), required for stable association of tmRNA with ribosomes. tmRNA and SmpB together mimic tRNA shape, replacing the anticodon stem-loop with SmpB. tmRNA is encoded by the ssrA gene; the 2 termini fold to resemble tRNA(Ala) and it encodes a 'tag peptide', a short internal open reading frame. During trans-translation Ala-aminoacylated tmRNA acts like a tRNA, entering the A-site of stalled ribosomes, displacing the stalled mRNA. The ribosome then switches to translate the ORF on the tmRNA; the nascent peptide is terminated with the 'tag peptide' encoded by the tmRNA and targeted for degradation. The ribosome is freed to recommence translation, which seems to be the essential function of trans-translation. This is SsrA-binding protein from Clostridium botulinum (strain Loch Maree / Type A3).